The sequence spans 76 residues: Parvalbumin beta 3 (76 aa).

The residue at position 1 (Ala-1) is an N-acetylalanine. The region spanning 31-66 is the EF-hand domain; the sequence is KSPEEVKKFFAIIDQDHSGFIEEEELKLFLQTFSAG. Positions 44, 46, 48, 50, 52, and 55 each coordinate Ca(2+).

It belongs to the parvalbumin family.

In terms of biological role, in muscle, parvalbumin is thought to be involved in relaxation after contraction. It binds two calcium ions. The polypeptide is Parvalbumin beta 3 (Merluccius polylepis (Southern hake)).